Consider the following 336-residue polypeptide: MKLAVIPGDGIGVEVTAEALKVLRKLVPDLETTEYDLGARRYNATGELLPDADLAAIREHDAILLGAIGDPSVTPGVLERGLLLNMRFALDHHVNLRPSQLYPGSKSPLAAQPDIDFVVVREGTEGPYTGNGGAIRVGTPHEIATEVSINTWFGAERVVRYAFALAQTRRKHVTLIHKTNVLSNAGAIWTRAVETVSAEYPDVETAYCHIDAATIYMVTDPSRFDVIVTDNLFGDIITDLAGAVTGGIGLAASGNIDASGTNPSMFEPVHGSAPDIAGQGIADPTAAILSAALLLRHLGRDGDAARIETAVEADLASRGDSKVVTSEVGDRIAAAL.

Arg87, Arg97, Arg121, and Asp211 together coordinate substrate. The Mg(2+) site is built by Asp211, Asp235, and Asp239. An NAD(+)-binding site is contributed by 271 to 283; it reads GSAPDIAGQGIAD.

It belongs to the isocitrate and isopropylmalate dehydrogenases family. LeuB type 2 subfamily. Homodimer. It depends on Mg(2+) as a cofactor. Mn(2+) serves as cofactor.

It localises to the cytoplasm. The catalysed reaction is (2R,3S)-3-isopropylmalate + NAD(+) = 4-methyl-2-oxopentanoate + CO2 + NADH. The protein operates within amino-acid biosynthesis; L-leucine biosynthesis; L-leucine from 3-methyl-2-oxobutanoate: step 3/4. Its function is as follows. Catalyzes the oxidation of 3-carboxy-2-hydroxy-4-methylpentanoate (3-isopropylmalate) to 3-carboxy-4-methyl-2-oxopentanoate. The product decarboxylates to 4-methyl-2 oxopentanoate. This Rhodococcus opacus (strain B4) protein is 3-isopropylmalate dehydrogenase.